The primary structure comprises 293 residues: 1D-myo-inositol 2-acetamido-2-deoxy-alpha-D-glucopyranoside deacetylase 2 (293 aa).

Residues His6, Asp9, and His142 each coordinate Zn(2+).

Belongs to the MshB deacetylase family. The cofactor is Zn(2+).

It carries out the reaction 1D-myo-inositol 2-acetamido-2-deoxy-alpha-D-glucopyranoside + H2O = 1D-myo-inositol 2-amino-2-deoxy-alpha-D-glucopyranoside + acetate. Functionally, catalyzes the deacetylation of 1D-myo-inositol 2-acetamido-2-deoxy-alpha-D-glucopyranoside (GlcNAc-Ins) in the mycothiol biosynthesis pathway. In Frankia alni (strain DSM 45986 / CECT 9034 / ACN14a), this protein is 1D-myo-inositol 2-acetamido-2-deoxy-alpha-D-glucopyranoside deacetylase 2.